Consider the following 125-residue polypeptide: Large ribosomal subunit protein bL12 (125 aa).

This sequence belongs to the bacterial ribosomal protein bL12 family. As to quaternary structure, homodimer. Part of the ribosomal stalk of the 50S ribosomal subunit. Forms a multimeric L10(L12)X complex, where L10 forms an elongated spine to which 2 to 4 L12 dimers bind in a sequential fashion. Binds GTP-bound translation factors.

Its function is as follows. Forms part of the ribosomal stalk which helps the ribosome interact with GTP-bound translation factors. Is thus essential for accurate translation. The sequence is that of Large ribosomal subunit protein bL12 from Erythrobacter litoralis (strain HTCC2594).